The primary structure comprises 1107 residues: Phospholipid-transporting ATPase 2 (1107 aa).

The Cytoplasmic portion of the chain corresponds to 1 to 33; sequence MKRFVYINDDEASKELCCDNRISNRKYTLWNFL. Residues 34–55 traverse the membrane as a helical segment; that stretch reads PKNLWEQFSRFMNQYFLLIACL. At 56-60 the chain is on the extracellular side; that stretch reads QLWSL. Residues 61-83 form a helical membrane-spanning segment; that stretch reads ITPVNPASTWGPLIFIFAVSASK. The Cytoplasmic segment spans residues 84 to 268; the sequence is EAWDDYHRYL…TAMDAMIDKL (185 aa). A helical membrane pass occupies residues 269 to 290; that stretch reads TGAIFVFQIVVVLVLGIAGNVW. At 291–315 the chain is on the extracellular side; the sequence is KDTEARKQWYVQYPEEAPWYELLVI. Residues 316–333 form a helical membrane-spanning segment; the sequence is PLRFELLCSIMIPISIKV. The Cytoplasmic portion of the chain corresponds to 334–807; that stretch reads SLDLVKGLYA…HGRYSYNRTA (474 aa). The 4-aspartylphosphate intermediate role is filled by Asp-381. Mg(2+) is bound by residues Asp-752 and Asp-756. Residues 808–827 form a helical membrane-spanning segment; that stretch reads FLSQYSFYKSLLICFIQIFF. At 828–841 the chain is on the extracellular side; that stretch reads SFISGVSGTSLFNS. Residues 842–860 traverse the membrane as a helical segment; the sequence is VSLMAYNVFYTSVPVLVSV. The Cytoplasmic segment spans residues 861-890; the sequence is IDKDLSEASVMQHPQILFYCQAGRLLNPST. Residues 891–912 traverse the membrane as a helical segment; the sequence is FAGWFGRSLFHAIIVFVITIHA. The Extracellular portion of the chain corresponds to 913–919; it reads YAYEKSE. The chain crosses the membrane as a helical span at residues 920-942; sequence MEELGMVALSGCIWLQAFVVAQE. Residues 943 to 948 lie on the Cytoplasmic side of the membrane; sequence TNSFTV. A helical transmembrane segment spans residues 949-969; it reads LQHLSIWGNLVGFYAINFLFS. At 970–982 the chain is on the extracellular side; that stretch reads AIPSSGMYTIMFR. The helical transmembrane segment at 983–1007 threads the bilayer; the sequence is LCSQPSYWITMFLIVGAGMGPIFAL. Residues 1008–1107 lie on the Cytoplasmic side of the membrane; the sequence is KYFRYTYRPS…SGYTRNCKDN (100 aa). The disordered stretch occupies residues 1048–1075; sequence DLSPISITQPKNRSPVYEPLLSDSPNAT. Ser-1050 carries the phosphoserine modification.

It belongs to the cation transport ATPase (P-type) (TC 3.A.3) family. Type IV subfamily. As to quaternary structure, interacts with ALIS1, ALIS3 and ALIS5 in a heterologous system.

It is found in the endoplasmic reticulum membrane. Its subcellular location is the prevacuolar compartment membrane. It carries out the reaction ATP + H2O + phospholipidSide 1 = ADP + phosphate + phospholipidSide 2.. In terms of biological role, involved in transport of phospholipids. Contributes to transmembrane flipping of lipids. Requires an interaction with a protein of the ALIS family for activity. Specific for phosphatidylserine and has no activity with lysolipid, phosphatidylcholine or phosphatidylethanolamine. The sequence is that of Phospholipid-transporting ATPase 2 from Arabidopsis thaliana (Mouse-ear cress).